The chain runs to 512 residues: Glucagon-like peptide 2 receptor (512 aa).

Residues 1-135 (MRRLWGPGTP…KQNVDHYHHT (135 aa)) lie on the Extracellular side of the membrane. Cystine bridges form between Cys-43/Cys-65, Cys-56/Cys-97, and Cys-78/Cys-119. N-linked (GlcNAc...) asparagine glycosylation is present at Asn-73. A helical membrane pass occupies residues 136–160 (LLSTLQLMYTVGYSLSLISLFLALT). Topologically, residues 161–172 (LFLFLRKLHCTR) are cytoplasmic. A helical membrane pass occupies residues 173-197 (NYIHMNLFASFILRALVVLVKDMVF). At 198–223 (YNSYSRRPDSESGWMSYLSEISASCR) the chain is on the extracellular side. The helical transmembrane segment at 224–247 (SVQVLLHYFVGTNHLWLLVEGLYL) threads the bilayer. Residues 248–261 (HALLEPTVLPERRL) are Cytoplasmic-facing. A helical transmembrane segment spans residues 262–283 (WPKYLVVGWAFPMLFVIPWIFV). Residues 284-301 (RASLENTGCWAVNENKKI) lie on the Extracellular side of the membrane. A helical transmembrane segment spans residues 302–324 (WWIIRGPILLCVTVNFFIFLKIL). Residues 325-348 (KLLISKFRAHQMCFRDYKYRLAKS) are Cytoplasmic-facing. Residues 349–367 (TLLLILLMGVHEFLFTFFT) form a helical membrane-spanning segment. At 368–379 (DDQVQGFSRLIR) the chain is on the extracellular side. A helical transmembrane segment spans residues 380–400 (LFIQLTLSSFHGFLVALQYGF). The Cytoplasmic segment spans residues 401–512 (ASREVKAELR…MEEILEESEI (112 aa)). Residues 458–494 (SGVSSHLTAGNLRDHGAQPHRGRGAWPRASSLSESSE) form a disordered region.

Belongs to the G-protein coupled receptor 2 family.

It is found in the cell membrane. This is a receptor for glucagon-like peptide 2. The activity of this receptor is mediated by G proteins which activate adenylyl cyclase. The polypeptide is Glucagon-like peptide 2 receptor (Glp2r) (Mus musculus (Mouse)).